A 456-amino-acid chain; its full sequence is Serine--tRNA ligase (456 aa).

Thr252–Glu254 contributes to the L-serine binding site. ATP is bound by residues Arg283–Glu285 and Val299. An L-serine-binding site is contributed by Glu306. Residue Glu370–Ser373 participates in ATP binding. Thr404 is a binding site for L-serine.

This sequence belongs to the class-II aminoacyl-tRNA synthetase family. Type-1 seryl-tRNA synthetase subfamily. In terms of assembly, homodimer. The tRNA molecule binds across the dimer.

The protein localises to the cytoplasm. It carries out the reaction tRNA(Ser) + L-serine + ATP = L-seryl-tRNA(Ser) + AMP + diphosphate + H(+). The catalysed reaction is tRNA(Sec) + L-serine + ATP = L-seryl-tRNA(Sec) + AMP + diphosphate + H(+). It participates in aminoacyl-tRNA biosynthesis; selenocysteinyl-tRNA(Sec) biosynthesis; L-seryl-tRNA(Sec) from L-serine and tRNA(Sec): step 1/1. Its function is as follows. Catalyzes the attachment of serine to tRNA(Ser). Is also able to aminoacylate tRNA(Sec) with serine, to form the misacylated tRNA L-seryl-tRNA(Sec), which will be further converted into selenocysteinyl-tRNA(Sec). The sequence is that of Serine--tRNA ligase from Korarchaeum cryptofilum (strain OPF8).